The primary structure comprises 88 residues: Large ribosomal subunit protein bL31B (88 aa).

Belongs to the bacterial ribosomal protein bL31 family. Type B subfamily. In terms of assembly, part of the 50S ribosomal subunit.

The chain is Large ribosomal subunit protein bL31B from Bordetella bronchiseptica (strain ATCC BAA-588 / NCTC 13252 / RB50) (Alcaligenes bronchisepticus).